A 148-amino-acid polypeptide reads, in one-letter code: Snaclec B9 (148 aa).

A signal peptide spans 1 to 24; that stretch reads MGRFIFVSFGLLVVFLSLSGTGAA. 3 disulfides stabilise this stretch: Cys27–Cys38, Cys55–Cys144, and Cys121–Cys136. The 112-residue stretch at 34-145 folds into the C-type lectin domain; it reads YDQHCYKVFD…CRLLGHFVCK (112 aa). Asn57 and Asn60 each carry an N-linked (GlcNAc...) asparagine glycan.

Belongs to the snaclec family. As to quaternary structure, heterodimer; disulfide-linked. As to expression, expressed by the venom gland.

It localises to the secreted. Its function is as follows. Interferes with one step of hemostasis (modulation of platelet aggregation, or coagulation cascade, for example). The protein is Snaclec B9 of Macrovipera lebetinus (Levantine viper).